A 608-amino-acid chain; its full sequence is UvrABC system protein C (608 aa).

One can recognise a GIY-YIG domain in the interval 16–94 (NRPGVYRMFD…IKEWRPPYNI (79 aa)). The UVR domain occupies 204–239 (NALADELNVGMEQAAMRLDFEKAAELRDQVAILRRV).

This sequence belongs to the UvrC family. In terms of assembly, interacts with UvrB in an incision complex.

The protein localises to the cytoplasm. The UvrABC repair system catalyzes the recognition and processing of DNA lesions. UvrC both incises the 5' and 3' sides of the lesion. The N-terminal half is responsible for the 3' incision and the C-terminal half is responsible for the 5' incision. The chain is UvrABC system protein C from Pseudomonas aeruginosa (strain ATCC 15692 / DSM 22644 / CIP 104116 / JCM 14847 / LMG 12228 / 1C / PRS 101 / PAO1).